The sequence spans 412 residues: MTTAEPSKTVQAAFRDTAIFDLIAQEAERQRVGLELIASENFCSAEVRAAQGSVLTNKYAEGYPGKRWYGGCEVVDEVERLAIERVKQLFGAEWANVQPHSGSSANLAVYNALLEPGDTVLGMDLAHGGHLTHGSPVNFSGLRYRVVGYKVNPETELIDMEEVRRLAHEHQPKMIIAGASAYSRIIDFAAFREIADEVGALLFADIAHIAGLIAAGLHPNALPHAHVVASTTHKTLRGPRGGVILSNDPEIGAKIDRAVFPGYQGGPLEHVIAAKAVAFGEALQPEFKDYAAQIIRNAQALAGAFQNRGYRVVSGGTDNHLFVLDLRPQGLNGTKATRRLDANDITISKSTLPYDTEKILHGGGIRIGTPAITTRGMKEADMERVADLIDRALKGEDVKAEVHAFAGSFPLP.

(6S)-5,6,7,8-tetrahydrofolate is bound by residues L125 and 129-131 (GHL). At K234 the chain carries N6-(pyridoxal phosphate)lysine. E250 contributes to the (6S)-5,6,7,8-tetrahydrofolate binding site.

Belongs to the SHMT family. Homodimer. The cofactor is pyridoxal 5'-phosphate.

Its subcellular location is the cytoplasm. It carries out the reaction (6R)-5,10-methylene-5,6,7,8-tetrahydrofolate + glycine + H2O = (6S)-5,6,7,8-tetrahydrofolate + L-serine. Its pathway is one-carbon metabolism; tetrahydrofolate interconversion. The protein operates within amino-acid biosynthesis; glycine biosynthesis; glycine from L-serine: step 1/1. In terms of biological role, catalyzes the reversible interconversion of serine and glycine with tetrahydrofolate (THF) serving as the one-carbon carrier. This reaction serves as the major source of one-carbon groups required for the biosynthesis of purines, thymidylate, methionine, and other important biomolecules. Also exhibits THF-independent aldolase activity toward beta-hydroxyamino acids, producing glycine and aldehydes, via a retro-aldol mechanism. This chain is Serine hydroxymethyltransferase, found in Deinococcus geothermalis (strain DSM 11300 / CIP 105573 / AG-3a).